The chain runs to 342 residues: Cytoplasmic tRNA 2-thiolation protein 1 (342 aa).

It belongs to the TtcA family. CTU1/NCS6/ATPBD3 subfamily.

The protein resides in the cytoplasm. The protein operates within tRNA modification; 5-methoxycarbonylmethyl-2-thiouridine-tRNA biosynthesis. Plays a central role in 2-thiolation of mcm(5)S(2)U at tRNA wobble positions of tRNA(Lys), tRNA(Glu) and tRNA(Gln). Directly binds tRNAs and probably acts by catalyzing adenylation of tRNAs, an intermediate required for 2-thiolation. It is unclear whether it acts as a sulfurtransferase that transfers sulfur from thiocarboxylated URM1 onto the uridine of tRNAs at wobble position. The polypeptide is Cytoplasmic tRNA 2-thiolation protein 1 (Anopheles gambiae (African malaria mosquito)).